The chain runs to 170 residues: uncharacterized protein (170 aa).

A helical membrane pass occupies residues 7 to 27 (LVELLIGLAIISIALNFAVPL).

The protein localises to the membrane. This is an uncharacterized protein from Haemophilus influenzae (strain ATCC 51907 / DSM 11121 / KW20 / Rd).